The primary structure comprises 363 residues: Protein RecA (363 aa).

Gly-79 to Thr-86 is an ATP binding site.

This sequence belongs to the RecA family.

Its subcellular location is the cytoplasm. In terms of biological role, can catalyze the hydrolysis of ATP in the presence of single-stranded DNA, the ATP-dependent uptake of single-stranded DNA by duplex DNA, and the ATP-dependent hybridization of homologous single-stranded DNAs. It interacts with LexA causing its activation and leading to its autocatalytic cleavage. The protein is Protein RecA of Borrelia turicatae (strain 91E135).